Consider the following 178-residue polypeptide: Leukemia NUP98 fusion partner 1 (178 aa).

Disordered stretches follow at residues 28–55 (EDQR…PLPV), 89–108 (SEDG…HSKI), and 147–178 (IKSR…KGPE). A compositionally biased stretch (basic residues) spans 34–47 (RERHRLQATSHRKT). Positions 147-167 (IKSRKKVEEERSSRKEEHGEA) are enriched in basic and acidic residues.

The polypeptide is Leukemia NUP98 fusion partner 1 (LNP1) (Homo sapiens (Human)).